Reading from the N-terminus, the 214-residue chain is Phosphoribosylglycinamide formyltransferase (214 aa).

12–14 (GSN) serves as a coordination point for N(1)-(5-phospho-beta-D-ribosyl)glycinamide. (6R)-10-formyltetrahydrofolate contacts are provided by residues 105 to 108 (LLIL) and Asn123. His125 serves as the catalytic Proton donor. Residue Asp167 participates in (6R)-10-formyltetrahydrofolate binding. Glu197 contacts N(1)-(5-phospho-beta-D-ribosyl)glycinamide.

It belongs to the GART family.

It carries out the reaction N(1)-(5-phospho-beta-D-ribosyl)glycinamide + (6R)-10-formyltetrahydrofolate = N(2)-formyl-N(1)-(5-phospho-beta-D-ribosyl)glycinamide + (6S)-5,6,7,8-tetrahydrofolate + H(+). It functions in the pathway purine metabolism; IMP biosynthesis via de novo pathway; N(2)-formyl-N(1)-(5-phospho-D-ribosyl)glycinamide from N(1)-(5-phospho-D-ribosyl)glycinamide (10-formyl THF route): step 1/1. The protein is Phosphoribosylglycinamide formyltransferase of Saccharomyces cerevisiae (strain ATCC 204508 / S288c) (Baker's yeast).